A 506-amino-acid chain; its full sequence is Anaerobic nitric oxide reductase transcription regulator NorR (506 aa).

4-aspartylphosphate is present on Asp-57. In terms of domain architecture, Sigma-54 factor interaction spans 187-416 (MIGLSPNMMQ…LEHAIHRAVV (230 aa)). ATP contacts are provided by residues 215–222 (GETGTGKE) and 278–287 (ADNGTLFLDE). The H-T-H motif DNA-binding region spans 481-500 (WAACARALETDVANLHRLAK).

The protein operates within nitrogen metabolism; nitric oxide reduction. Required for the expression of anaerobic nitric oxide (NO) reductase, acts as a transcriptional activator for at least the norVW operon. Activation also requires sigma-54. This chain is Anaerobic nitric oxide reductase transcription regulator NorR, found in Citrobacter koseri (strain ATCC BAA-895 / CDC 4225-83 / SGSC4696).